A 418-amino-acid chain; its full sequence is ADP-ribose glycohydrolase MACROD2 (418 aa).

One can recognise a Macro domain in the interval 57–238 (PEEIQVKNSL…IYKRKLNEFF (182 aa)). Substrate contacts are provided by residues 75–77 (GDI), 88–90 (AAN), 95–100 (GGGGVD), 183–189 (ISTGIYG), and phenylalanine 222. Residues 238-418 (FPKDGGDDEE…KDTNDDANEA (181 aa)) form a disordered region. Basic and acidic residues predominate over residues 250–262 (KGDSDEMKEDTEG). The segment covering 295 to 318 (TGNTQDMTAMSLETNEGNDVSSPA) has biased composition (polar residues). The segment covering 321 to 360 (PLKEGEELSEAKITGEKISVEPKTPEPEDAKMTVEEKSQE) has biased composition (basic and acidic residues). Positions 377–389 (ETEDLDGDSEEPS) are enriched in acidic residues.

It belongs to the MacroD-type family. MacroD1/2-like subfamily.

The protein resides in the nucleus. It catalyses the reaction 2''-O-acetyl-ADP-D-ribose + H2O = ADP-D-ribose + acetate + H(+). The enzyme catalyses 4-O-(ADP-D-ribosyl)-L-aspartyl-[protein] + H2O = L-aspartyl-[protein] + ADP-D-ribose + H(+). It carries out the reaction 5-O-(ADP-D-ribosyl)-L-glutamyl-[protein] + H2O = L-glutamyl-[protein] + ADP-D-ribose + H(+). The catalysed reaction is alpha-NAD(+) + H2O = ADP-D-ribose + nicotinamide + H(+). Subject to product inhibition by ADP-ribose. Functionally, removes ADP-ribose from aspartate and glutamate residues in proteins bearing a single ADP-ribose moiety. Inactive towards proteins bearing poly-ADP-ribose. Deacetylates O-acetyl-ADP ribose, a signaling molecule generated by the deacetylation of acetylated lysine residues in histones and other proteins. The polypeptide is ADP-ribose glycohydrolase MACROD2 (Xenopus laevis (African clawed frog)).